Reading from the N-terminus, the 157-residue chain is Arginine repressor (157 aa).

It belongs to the ArgR family.

The protein resides in the cytoplasm. The protein operates within amino-acid biosynthesis; L-arginine biosynthesis [regulation]. Its function is as follows. Regulates arginine biosynthesis genes. In Colwellia psychrerythraea (strain 34H / ATCC BAA-681) (Vibrio psychroerythus), this protein is Arginine repressor.